The sequence spans 503 residues: Putative cytochrome P450 71A28 (503 aa).

Residues 1-21 (MILISLCFTTFLAFLFLNPLL) form a helical membrane-spanning segment. Cysteine 443 contacts heme.

Belongs to the cytochrome P450 family. Requires heme as cofactor.

Its subcellular location is the membrane. The protein is Putative cytochrome P450 71A28 (CYP71A28) of Arabidopsis thaliana (Mouse-ear cress).